A 945-amino-acid chain; its full sequence is Leucine--tRNA ligase (945 aa).

The 'HIGH' region motif lies at 43 to 53 (PYPNGAVHIGH). A 'KMSKS' region motif is present at residues 638 to 642 (KMSKS). Residue K641 coordinates ATP.

The protein belongs to the class-I aminoacyl-tRNA synthetase family.

Its subcellular location is the cytoplasm. The catalysed reaction is tRNA(Leu) + L-leucine + ATP = L-leucyl-tRNA(Leu) + AMP + diphosphate. This chain is Leucine--tRNA ligase, found in Pyrobaculum islandicum (strain DSM 4184 / JCM 9189 / GEO3).